The following is an 89-amino-acid chain: uncharacterized protein (89 aa).

A run of 2 helical transmembrane segments spans residues 1–21 (MFLA…ISLI) and 28–48 (GISL…TIAA).

It is found in the cell membrane. This is an uncharacterized protein from Methanocaldococcus jannaschii (strain ATCC 43067 / DSM 2661 / JAL-1 / JCM 10045 / NBRC 100440) (Methanococcus jannaschii).